Consider the following 480-residue polypeptide: ATP synthase subunit beta (480 aa).

153 to 160 (GGAGVGKT) contacts ATP.

It belongs to the ATPase alpha/beta chains family. F-type ATPases have 2 components, CF(1) - the catalytic core - and CF(0) - the membrane proton channel. CF(1) has five subunits: alpha(3), beta(3), gamma(1), delta(1), epsilon(1). CF(0) has three main subunits: a(1), b(2) and c(9-12). The alpha and beta chains form an alternating ring which encloses part of the gamma chain. CF(1) is attached to CF(0) by a central stalk formed by the gamma and epsilon chains, while a peripheral stalk is formed by the delta and b chains.

It localises to the cell membrane. It carries out the reaction ATP + H2O + 4 H(+)(in) = ADP + phosphate + 5 H(+)(out). Its function is as follows. Produces ATP from ADP in the presence of a proton gradient across the membrane. The catalytic sites are hosted primarily by the beta subunits. The polypeptide is ATP synthase subunit beta (Lactobacillus gasseri (strain ATCC 33323 / DSM 20243 / BCRC 14619 / CIP 102991 / JCM 1131 / KCTC 3163 / NCIMB 11718 / NCTC 13722 / AM63)).